A 383-amino-acid polypeptide reads, in one-letter code: Succinyl-diaminopimelate desuccinylase (383 aa).

His72 contributes to the Zn(2+) binding site. The active site involves Asp74. Residue Asp105 participates in Zn(2+) binding. Glu137 acts as the Proton acceptor in catalysis. Residues Glu138, Glu167, and His352 each contribute to the Zn(2+) site.

This sequence belongs to the peptidase M20A family. DapE subfamily. As to quaternary structure, homodimer. It depends on Zn(2+) as a cofactor. Co(2+) is required as a cofactor.

It catalyses the reaction N-succinyl-(2S,6S)-2,6-diaminopimelate + H2O = (2S,6S)-2,6-diaminopimelate + succinate. Its pathway is amino-acid biosynthesis; L-lysine biosynthesis via DAP pathway; LL-2,6-diaminopimelate from (S)-tetrahydrodipicolinate (succinylase route): step 3/3. Catalyzes the hydrolysis of N-succinyl-L,L-diaminopimelic acid (SDAP), forming succinate and LL-2,6-diaminopimelate (DAP), an intermediate involved in the bacterial biosynthesis of lysine and meso-diaminopimelic acid, an essential component of bacterial cell walls. The polypeptide is Succinyl-diaminopimelate desuccinylase (Ehrlichia ruminantium (strain Welgevonden)).